A 494-amino-acid chain; its full sequence is tRNA-2-methylthio-N(6)-dimethylallyladenosine synthase (494 aa).

The MTTase N-terminal domain maps to 12-131; that stretch reads PTYRVVTYGC…LPVLLKRARH (120 aa). The [4Fe-4S] cluster site is built by C21, C60, C94, C168, C172, and C175. One can recognise a Radical SAM core domain in the interval 154–385; that stretch reads RDSAYSAWVS…ELVDDIAWQE (232 aa). The TRAM domain occupies 387–457; sequence KAQVGRAVEV…PHHLVADGGL (71 aa).

This sequence belongs to the methylthiotransferase family. MiaB subfamily. As to quaternary structure, monomer. Requires [4Fe-4S] cluster as cofactor.

It localises to the cytoplasm. The enzyme catalyses N(6)-dimethylallyladenosine(37) in tRNA + (sulfur carrier)-SH + AH2 + 2 S-adenosyl-L-methionine = 2-methylsulfanyl-N(6)-dimethylallyladenosine(37) in tRNA + (sulfur carrier)-H + 5'-deoxyadenosine + L-methionine + A + S-adenosyl-L-homocysteine + 2 H(+). Catalyzes the methylthiolation of N6-(dimethylallyl)adenosine (i(6)A), leading to the formation of 2-methylthio-N6-(dimethylallyl)adenosine (ms(2)i(6)A) at position 37 in tRNAs that read codons beginning with uridine. This Cutibacterium acnes (strain DSM 16379 / KPA171202) (Propionibacterium acnes) protein is tRNA-2-methylthio-N(6)-dimethylallyladenosine synthase.